The chain runs to 431 residues: UDP-N-acetylglucosamine 1-carboxyvinyltransferase (431 aa).

Residue 22–23 (KN) participates in phosphoenolpyruvate binding. UDP-N-acetyl-alpha-D-glucosamine is bound at residue R93. C117 acts as the Proton donor in catalysis. A 2-(S-cysteinyl)pyruvic acid O-phosphothioketal modification is found at C117. The UDP-N-acetyl-alpha-D-glucosamine site is built by D307 and V329.

Belongs to the EPSP synthase family. MurA subfamily.

The protein resides in the cytoplasm. It carries out the reaction phosphoenolpyruvate + UDP-N-acetyl-alpha-D-glucosamine = UDP-N-acetyl-3-O-(1-carboxyvinyl)-alpha-D-glucosamine + phosphate. It functions in the pathway cell wall biogenesis; peptidoglycan biosynthesis. Cell wall formation. Adds enolpyruvyl to UDP-N-acetylglucosamine. In Nitrosococcus oceani (strain ATCC 19707 / BCRC 17464 / JCM 30415 / NCIMB 11848 / C-107), this protein is UDP-N-acetylglucosamine 1-carboxyvinyltransferase.